An 801-amino-acid polypeptide reads, in one-letter code: MAQPLLSLRQRFESTFSSHRQEIFMFLSRIQSLGNGILKPHQLFSEFQAISKIDRLKLEDSALVQLLNSAQEAIVCSPWIALAIRLRPGVWEYVRLNVHQLVVEELTVPDYLYLKEELVNASSNGNFVLELDFAPFTASIPRPTLTKSIGNGVEFLNRHLSAKMFQDKDSMHPLLDFLRLHHHNGRTLMLNNRVQTVNGLQDILRIAGEYLSKLPSDTPYSDFEHKFQEIGFERGWGDTAEHVSEMFHMLLDLLEAPDACTLETFLGKIPMIFNVVILSPHGYFAQENVLGYPDTGGQVVYILDQVPAMEREMTKRIKEQGLDIIPRILIVTRLLPDAVGTTCNLRLEKVFGAEHSHILRVPFRTEKGILRKWISRFEVWPYMETFTEDVAKEIALELKAKPDLIIGNYSEGNLVASLLANKLGVTQCTIAHALEKTKYPDSDIYWEKFDKKYHFSSQFTADLIAMNHTDFIITSTFQEIAGSKDTVGQYESHTAFTMPGLYRVVHGIDVFDPKFNIVSPGADTSVYYPYTEKKRRLTALHPEIEDLLFSSVENKEHICVLKDRYKPILFTMARLDNVKNLTGIVEWYAKNPKLRELVNLVVVGGDRRKESKDLEEQAQMKKMYGLIDTYKLNGQFRWISAQKNRVRNGELYRCIADTKGAFVQPAFYEAFGLTVIEAMTCGLPTFATIHGGPAEIIVHGTSGFHIDPYHGEKAAELIVNFFERCKTEPSHWETISAGGLKRIQEKYTWQIYSERLLTLGGVYGFWKHVSKLDRIEIRRYLEMFCALKYRNLAESVPLAVD.

The segment at 271-748 (MIFNVVILSP…GLKRIQEKYT (478 aa)) is GT-B glycosyltransferase.

This sequence belongs to the glycosyltransferase 1 family. Plant sucrose synthase subfamily. As to quaternary structure, homotetramer. As to expression, exclusively expressed in flowers.

It carries out the reaction an NDP-alpha-D-glucose + D-fructose = a ribonucleoside 5'-diphosphate + sucrose + H(+). Its function is as follows. Sucrose-cleaving enzyme that provides UDP-glucose and fructose for various metabolic pathways. The sequence is that of Sucrose synthase isoform 2 from Daucus carota (Wild carrot).